The following is a 426-amino-acid chain: Serine--tRNA ligase (426 aa).

Position 233 to 235 (233 to 235) interacts with L-serine; that stretch reads TAE. 264 to 266 is a binding site for ATP; the sequence is RSE. Glutamate 287 is an L-serine binding site. Position 351–354 (351–354) interacts with ATP; it reads EISS. L-serine is bound at residue serine 387.

This sequence belongs to the class-II aminoacyl-tRNA synthetase family. Type-1 seryl-tRNA synthetase subfamily. As to quaternary structure, homodimer. The tRNA molecule binds across the dimer.

The protein resides in the cytoplasm. It catalyses the reaction tRNA(Ser) + L-serine + ATP = L-seryl-tRNA(Ser) + AMP + diphosphate + H(+). It carries out the reaction tRNA(Sec) + L-serine + ATP = L-seryl-tRNA(Sec) + AMP + diphosphate + H(+). Its pathway is aminoacyl-tRNA biosynthesis; selenocysteinyl-tRNA(Sec) biosynthesis; L-seryl-tRNA(Sec) from L-serine and tRNA(Sec): step 1/1. Its function is as follows. Catalyzes the attachment of serine to tRNA(Ser). Is also able to aminoacylate tRNA(Sec) with serine, to form the misacylated tRNA L-seryl-tRNA(Sec), which will be further converted into selenocysteinyl-tRNA(Sec). This chain is Serine--tRNA ligase, found in Stutzerimonas stutzeri (strain A1501) (Pseudomonas stutzeri).